The primary structure comprises 229 residues: Interleukin-27 subunit beta (229 aa).

The first 20 residues, 1–20, serve as a signal peptide directing secretion; the sequence is MTPQLLLALVLWASCPPCSG. Fibronectin type-III domains lie at 24–130 and 131–227; these read PPAA…IKPD and PPEG…TMSL. Asn-55 and Asn-105 each carry an N-linked (GlcNAc...) asparagine glycan.

The protein belongs to the type I cytokine receptor family. Type 3 subfamily. In terms of assembly, heterodimer with IL27/IL27A; not disulfide-linked. This heterodimer is known as interleukin IL-27. Heterodimer with IL12A; not disulfide-linked. This heterodimer is known as interleukin IL-35. Interacts with SQSTM1.

Its subcellular location is the secreted. Functionally, associates with IL27 to form the IL-27 interleukin, a heterodimeric cytokine which functions in innate immunity. IL-27 has pro- and anti-inflammatory properties, that can regulate T-helper cell development, suppress T-cell proliferation, stimulate cytotoxic T-cell activity, induce isotype switching in B-cells, and that has diverse effects on innate immune cells. Among its target cells are CD4 T-helper cells which can differentiate in type 1 effector cells (TH1), type 2 effector cells (TH2) and IL17 producing helper T-cells (TH17). It drives rapid clonal expansion of naive but not memory CD4 T-cells. It also strongly synergizes with IL-12 to trigger interferon-gamma/IFN-gamma production of naive CD4 T-cells, binds to the cytokine receptor WSX-1/TCCR. Another important role of IL-27 is its antitumor activity as well as its antiangiogenic activity with activation of production of antiangiogenic chemokines. The chain is Interleukin-27 subunit beta (EBI3) from Homo sapiens (Human).